Here is a 211-residue protein sequence, read N- to C-terminus: Glycerol-3-phosphate acyltransferase (211 aa).

5 helical membrane-spanning segments follow: residues 5–25 (ALGM…ILFC), 58–78 (VLVF…ALGV), 80–100 (PLYL…PVFF), 112–132 (LGAI…TWLL), and 138–158 (GYSS…VWWF).

This sequence belongs to the PlsY family. Probably interacts with PlsX.

The protein resides in the cell inner membrane. The catalysed reaction is an acyl phosphate + sn-glycerol 3-phosphate = a 1-acyl-sn-glycero-3-phosphate + phosphate. Its pathway is lipid metabolism; phospholipid metabolism. Its function is as follows. Catalyzes the transfer of an acyl group from acyl-phosphate (acyl-PO(4)) to glycerol-3-phosphate (G3P) to form lysophosphatidic acid (LPA). This enzyme utilizes acyl-phosphate as fatty acyl donor, but not acyl-CoA or acyl-ACP. The polypeptide is Glycerol-3-phosphate acyltransferase (Pectobacterium atrosepticum (strain SCRI 1043 / ATCC BAA-672) (Erwinia carotovora subsp. atroseptica)).